Reading from the N-terminus, the 384-residue chain is ATP phosphoribosyltransferase regulatory subunit (384 aa).

This sequence belongs to the class-II aminoacyl-tRNA synthetase family. HisZ subfamily. As to quaternary structure, heteromultimer composed of HisG and HisZ subunits.

The protein resides in the cytoplasm. It functions in the pathway amino-acid biosynthesis; L-histidine biosynthesis; L-histidine from 5-phospho-alpha-D-ribose 1-diphosphate: step 1/9. In terms of biological role, required for the first step of histidine biosynthesis. May allow the feedback regulation of ATP phosphoribosyltransferase activity by histidine. The chain is ATP phosphoribosyltransferase regulatory subunit from Paracidovorax citrulli (strain AAC00-1) (Acidovorax citrulli).